The primary structure comprises 24 residues: U1-poneritoxin-Na1a (24 aa).

This sequence belongs to the non-disulfide-bridged peptide (NDBP) superfamily. Medium-length antimicrobial peptide (group 3) family. Ponericin-W subfamily. In terms of tissue distribution, expressed by the venom gland.

The protein resides in the secreted. The protein localises to the target cell membrane. In terms of biological role, has a broad spectrum of activity against both Gram-positive and Gram-negative bacteria and S.cerevisiae. Has insecticidal and hemolytic activities. May act by disrupting the integrity of the bacterial cell membrane. The chain is U1-poneritoxin-Na1a from Neoponera apicalis (Ant).